The following is a 339-amino-acid chain: uncharacterized protein (339 aa).

28 to 35 (GPINSGKT) is a binding site for ATP.

It belongs to the archaeal ATPase family.

This is an uncharacterized protein from Pyrococcus abyssi (strain GE5 / Orsay).